Reading from the N-terminus, the 447-residue chain is MKPVIALVGRPNVGKSTLFNRMTRSRDALVADLPGLTRDRHYGEGRIGDRPFIAIDTGGFEPVVKEGIVAEMAKQTRQAVVEADVVIFIVDGRLGLAPQDRAIADYLRKTGRRVMLAVNKAEGMKYTSVAADFYELGMGDPYAISAAHGDGVRELVDEALELAVQERPELAEEDADSGKGVKIAIVGRPNVGKSTLVNTLIGEERVIAFDMPGTTRDAIYVEFERGGKPYTLIDTAGLRRRGKVFEAIEKFSVVKTLQSIADANVVILLLDAQQDISDQDAHIAGFIVESGRALVVGVNKWDGLDGHTRDRIKHDLERKLQFLSFANFHFVSARERTGIGALMRSVDDAYAAAMVKLPTPQLTRVLQEAVEFQQPKRAGVSRPKLRYAHQGGSNPPIIVIHGNALSSVSETYRRYLENRYRAAFKLKGTPLRIEFRTNKNPYADSKD.

2 consecutive EngA-type G domains span residues 3–167 (PVIA…VQER) and 181–354 (VKIA…AAAM). Residues 9–16 (GRPNVGKS), 56–60 (DTGGF), 119–122 (NKAE), 187–194 (GRPNVGKS), 234–238 (DTAGL), and 299–302 (NKWD) contribute to the GTP site. The KH-like domain occupies 355–439 (VKLPTPQLTR…PLRIEFRTNK (85 aa)).

It belongs to the TRAFAC class TrmE-Era-EngA-EngB-Septin-like GTPase superfamily. EngA (Der) GTPase family. As to quaternary structure, associates with the 50S ribosomal subunit.

Its function is as follows. GTPase that plays an essential role in the late steps of ribosome biogenesis. This is GTPase Der from Cupriavidus pinatubonensis (strain JMP 134 / LMG 1197) (Cupriavidus necator (strain JMP 134)).